Reading from the N-terminus, the 347-residue chain is S-adenosylmethionine:tRNA ribosyltransferase-isomerase (347 aa).

This sequence belongs to the QueA family. Monomer.

The protein resides in the cytoplasm. The catalysed reaction is 7-aminomethyl-7-carbaguanosine(34) in tRNA + S-adenosyl-L-methionine = epoxyqueuosine(34) in tRNA + adenine + L-methionine + 2 H(+). Its pathway is tRNA modification; tRNA-queuosine biosynthesis. Functionally, transfers and isomerizes the ribose moiety from AdoMet to the 7-aminomethyl group of 7-deazaguanine (preQ1-tRNA) to give epoxyqueuosine (oQ-tRNA). The polypeptide is S-adenosylmethionine:tRNA ribosyltransferase-isomerase (Xylella fastidiosa (strain M23)).